The sequence spans 403 residues: Arginine biosynthesis bifunctional protein ArgJ (403 aa).

Residues Met1–His11 are compositionally biased toward polar residues. Positions Met1–Ala21 are disordered. 6 residues coordinate substrate: Thr161, Lys183, Thr194, Glu273, Asn398, and Thr403. Catalysis depends on Thr194, which acts as the Nucleophile.

This sequence belongs to the ArgJ family. Heterotetramer of two alpha and two beta chains.

The protein resides in the cytoplasm. The catalysed reaction is N(2)-acetyl-L-ornithine + L-glutamate = N-acetyl-L-glutamate + L-ornithine. It carries out the reaction L-glutamate + acetyl-CoA = N-acetyl-L-glutamate + CoA + H(+). Its pathway is amino-acid biosynthesis; L-arginine biosynthesis; L-ornithine and N-acetyl-L-glutamate from L-glutamate and N(2)-acetyl-L-ornithine (cyclic): step 1/1. It participates in amino-acid biosynthesis; L-arginine biosynthesis; N(2)-acetyl-L-ornithine from L-glutamate: step 1/4. Functionally, catalyzes two activities which are involved in the cyclic version of arginine biosynthesis: the synthesis of N-acetylglutamate from glutamate and acetyl-CoA as the acetyl donor, and of ornithine by transacetylation between N(2)-acetylornithine and glutamate. The chain is Arginine biosynthesis bifunctional protein ArgJ from Rhodococcoides fascians (Rhodococcus fascians).